The sequence spans 402 residues: Multidrug resistance protein MdtH (402 aa).

At 1 to 12 (MSRVSQARNLGK) the chain is on the cytoplasmic side. A helical membrane pass occupies residues 13 to 33 (YFLLIDNMLVVLGFFVVFPLI). The Periplasmic portion of the chain corresponds to 34–98 (SIRFVDQMGW…GFATMGIAHE (65 aa)). A helical transmembrane segment spans residues 99–116 (PWLLWFSCLLSGLGGTLF). Topologically, residues 117 to 138 (DPPRSALVVKLIRPQQRGRFFS) are cytoplasmic. A helical membrane pass occupies residues 139-159 (LLMMQDSAGAVIGALLGSWLL). Residues 160 to 164 (QYDFR) lie on the Periplasmic side of the membrane. Residues 165–185 (LVCATGAVLFVLCAAFNAWLL) traverse the membrane as a helical segment. At 186–213 (PAWKLSTVRTPVREGMTRVMRDKRFVTY) the chain is on the cytoplasmic side. A helical membrane pass occupies residues 214–234 (VLTLAGYYMLAVQVMLMLPIM). Over 235–243 (VNDVAGAPS) the chain is Periplasmic. A helical transmembrane segment spans residues 244-264 (AVKWMYAIEACLSLTLLYPIA). Topologically, residues 265–276 (RWSEKHFRLEHR) are cytoplasmic. The helical transmembrane segment at 277 to 297 (LMAGLLIMSLSMMPVGMVSGL) threads the bilayer. Topologically, residues 298 to 299 (QQ) are periplasmic. Residues 300–320 (LFTLICLFYIGSIIAEPARET) form a helical membrane-spanning segment. At 321–339 (LSASLADARARGSYMGCSR) the chain is on the cytoplasmic side. The helical transmembrane segment at 340 to 360 (LGLAIGGAIGYIGGGWLFDLG) threads the bilayer. At 361 to 367 (KSAHQPE) the chain is on the periplasmic side. A helical membrane pass occupies residues 368 to 388 (LPWMMLGIIGIFTFLALGWQF). Topologically, residues 389 to 402 (SQKRAARRLLERDA) are cytoplasmic.

This sequence belongs to the major facilitator superfamily. DHA1 family. MdtH (TC 2.A.1.2.21) subfamily.

It is found in the cell inner membrane. Confers resistance to norfloxacin and enoxacin. This is Multidrug resistance protein MdtH from Escherichia coli (strain SE11).